The sequence spans 359 residues: Heat-inducible transcription repressor HrcA (359 aa).

This sequence belongs to the HrcA family.

Its function is as follows. Negative regulator of class I heat shock genes (grpE-dnaK-dnaJ and groELS operons). Prevents heat-shock induction of these operons. This is Heat-inducible transcription repressor HrcA from Roseiflexus castenholzii (strain DSM 13941 / HLO8).